A 160-amino-acid polypeptide reads, in one-letter code: Troponin C, skeletal muscle (160 aa).

Thr-2 carries the post-translational modification N-acetylthreonine. 4 EF-hand domains span residues 15-50, 51-86, 91-126, and 127-160; these read EMIA…LGQT, PTKE…QMKE, KSEE…SGEH, and VTDE…EGVQ. The Ca(2+) site is built by Asp-28, Asp-30, Asp-34, Glu-39, Asp-64, Asp-66, Ser-68, Thr-70, Glu-75, Asp-104, Asn-106, Asp-108, Tyr-110, Glu-115, Asp-140, Asn-142, Asp-144, Arg-146, and Glu-151.

The protein belongs to the troponin C family.

In terms of biological role, troponin is the central regulatory protein of striated muscle contraction. Tn consists of three components: Tn-I which is the inhibitor of actomyosin ATPase, Tn-T which contains the binding site for tropomyosin and Tn-C. The binding of calcium to Tn-C abolishes the inhibitory action of Tn on actin filaments. The chain is Troponin C, skeletal muscle (TNNC2) from Oryctolagus cuniculus (Rabbit).